The sequence spans 50 residues: Protein PsbN (50 aa).

The chain crosses the membrane as a helical span at residues 14–34 (VAVTILAILLALTGFGLWTAF).

It belongs to the PsbN family.

The protein resides in the cellular thylakoid membrane. Its function is as follows. May play a role in photosystem I and II biogenesis. The chain is Protein PsbN from Prochlorococcus marinus (strain MIT 9312).